Reading from the N-terminus, the 438-residue chain is Protein maelstrom 1 (438 aa).

The segment at residues 2–69 is a DNA-binding region (HMG box); it reads APKKRNGFMT…LERTAKKERL (68 aa). The disordered stretch occupies residues 374-438; the sequence is KEMGSRDLSP…NMGAGKKIAR (65 aa). Residues 381-391 show a composition bias toward polar residues; it reads LSPSSSHQSVS.

It belongs to the maelstrom family.

The protein localises to the cytoplasm. It localises to the nucleus. Involved both in the piRNA and miRNA metabolic processes. As a component of the meiotic nuage, plays a central role during oogenesis by repressing transposable elements and preventing their mobilization, which is essential for the germline integrity. Repression of transposable elements is mediated via the piRNA metabolic process, which mediates the repression of transposable elements during meiosis by forming complexes composed of piRNAs and Piwi proteins and governs the repression of transposons. As a nuclear component, it is required for proper differentiation in the germline stem cell (GSC) lineage by repressing microRNA-7 (miR-7), thereby acting as an indirect regulator of bag-of-marbles (Bam). Acts by binding to the promoter of miR-7 gene and repressing its expression; miR-7 repression alleviates the Bam repression by miR-7, thereby allowing differentiation in the germline stem cell (GSC) lineage. The chain is Protein maelstrom 1 (mael1) from Drosophila persimilis (Fruit fly).